Here is a 139-residue protein sequence, read N- to C-terminus: Large ribosomal subunit protein uL16 (139 aa).

Residues 1–20 (MLMPRRVKHRKQHHPTRRGA) show a composition bias toward basic residues. The interval 1–24 (MLMPRRVKHRKQHHPTRRGAAKGG) is disordered.

It belongs to the universal ribosomal protein uL16 family. In terms of assembly, part of the 50S ribosomal subunit.

Binds 23S rRNA and is also seen to make contacts with the A and possibly P site tRNAs. This Nocardioides sp. (strain ATCC BAA-499 / JS614) protein is Large ribosomal subunit protein uL16.